The following is a 142-amino-acid chain: ATP synthase epsilon chain (142 aa).

The protein belongs to the ATPase epsilon chain family. F-type ATPases have 2 components, CF(1) - the catalytic core - and CF(0) - the membrane proton channel. CF(1) has five subunits: alpha(3), beta(3), gamma(1), delta(1), epsilon(1). CF(0) has three main subunits: a, b and c.

Its subcellular location is the cell inner membrane. Its function is as follows. Produces ATP from ADP in the presence of a proton gradient across the membrane. The sequence is that of ATP synthase epsilon chain from Shewanella denitrificans (strain OS217 / ATCC BAA-1090 / DSM 15013).